The following is a 384-amino-acid chain: MTNPIIAFQNVSKVFEDSGTQVLKDINFELEEGKFYTLLGASGSGKSTILNIIAGLLDATSGDVLLDGKRINDIPINKRDVHTVFQSYALFPHMNVFDNVAFALKLKKVPKKEIEERVKEALKMVQLDGYQKRSIQKLSGGQRQRVAIARAIINQPRVVLLDEPLSALDLKLRTEMQYELRELQKRLGITFVFVTHDQEEALAMSDWIFVMNDGEIVQSGTPVDIYDEPINHFVATFIGESNILPGVMIEDYLVEFNGKRFESVDGGMRPNEPVEVVIRPEDLQITLPEEGKLQVRVETQLFRGVHYEIIAYDNLGNEWMIHSTRKAIEGEIIGLDFTPEDIHIMRLNETEEEFDARIEEYVEMEEPEDGLINAIEEERHEENS.

The region spanning Ile6–Ile238 is the ABC transporter domain. Gly40–Ser47 contributes to the ATP binding site.

It belongs to the ABC transporter superfamily. Spermidine/putrescine importer (TC 3.A.1.11.1) family. In terms of assembly, the complex is composed of two ATP-binding proteins (PotA), two transmembrane proteins (PotB and PotC) and a solute-binding protein (PotD).

The protein localises to the cell membrane. It carries out the reaction ATP + H2O + polyamine-[polyamine-binding protein]Side 1 = ADP + phosphate + polyamineSide 2 + [polyamine-binding protein]Side 1.. In terms of biological role, part of the ABC transporter complex PotABCD involved in spermidine/putrescine import. Responsible for energy coupling to the transport system. The polypeptide is Spermidine/putrescine import ATP-binding protein PotA (Streptococcus thermophilus (strain ATCC BAA-491 / LMD-9)).